The following is a 555-amino-acid chain: Hydroxylamine reductase (555 aa).

Residues cysteine 3, cysteine 6, cysteine 18, and cysteine 25 each coordinate [4Fe-4S] cluster. The hybrid [4Fe-2O-2S] cluster site is built by histidine 252, glutamate 276, cysteine 320, cysteine 407, cysteine 435, cysteine 460, glutamate 494, and lysine 496. A Cysteine persulfide modification is found at cysteine 407.

This sequence belongs to the HCP family. Requires [4Fe-4S] cluster as cofactor. Hybrid [4Fe-2O-2S] cluster serves as cofactor.

The protein localises to the cytoplasm. The enzyme catalyses A + NH4(+) + H2O = hydroxylamine + AH2 + H(+). In terms of biological role, catalyzes the reduction of hydroxylamine to form NH(3) and H(2)O. This Burkholderia ambifaria (strain MC40-6) protein is Hydroxylamine reductase.